A 91-amino-acid chain; its full sequence is uncharacterized protein (91 aa).

This is an uncharacterized protein from Acidianus convivator (ABV).